A 538-amino-acid chain; its full sequence is NADH-quinone oxidoreductase subunit N (538 aa).

A run of 14 helical transmembrane segments spans residues 28–48 (LAPV…EAFV), 57–77 (QIIV…TTIA), 94–114 (PTLA…VLFA), 147–167 (HTEV…FAAA), 170–190 (LIMM…LCGM), 206–226 (FLLG…LYGC), 249–269 (IVAG…AVPF), 288–308 (MAVA…YVGL), 315–335 (WQIV…IVGL), 343–363 (LLAY…VGAW), 380–400 (VLVY…LILM), 424–444 (IGVL…TAGF), 458–478 (GYAW…AFYL), and 503–523 (IAGW…GVAP).

This sequence belongs to the complex I subunit 2 family. As to quaternary structure, NDH-1 is composed of 14 different subunits. Subunits NuoA, H, J, K, L, M, N constitute the membrane sector of the complex.

It is found in the cell membrane. The enzyme catalyses a quinone + NADH + 5 H(+)(in) = a quinol + NAD(+) + 4 H(+)(out). NDH-1 shuttles electrons from NADH, via FMN and iron-sulfur (Fe-S) centers, to quinones in the respiratory chain. The immediate electron acceptor for the enzyme in this species is believed to be a menaquinone. Couples the redox reaction to proton translocation (for every two electrons transferred, four hydrogen ions are translocated across the cytoplasmic membrane), and thus conserves the redox energy in a proton gradient. The sequence is that of NADH-quinone oxidoreductase subunit N from Cutibacterium acnes (strain DSM 16379 / KPA171202) (Propionibacterium acnes).